Here is a 70-residue protein sequence, read N- to C-terminus: Brevinin-1CG3 (70 aa).

Positions 1–22 (MFTLKKSLLLLFFLGTINLSLC) are cleaved as a signal peptide. Residues 23-44 (EQERNAEEERRDDSDKRDVEVE) constitute a propeptide, removed in mature form. Residues Cys-64 and Cys-70 are joined by a disulfide bond.

It belongs to the frog skin active peptide (FSAP) family. Brevinin subfamily. Expressed by the skin glands.

It localises to the secreted. In terms of biological role, antimicrobial peptide active against a variety of Gram-positive and some Gram-negative bacterial strains. Has antifungal activity against a slime mold isolate. Has hemolytic activity against human erythrocytes. This Amolops chunganensis (Chungan torrent frog) protein is Brevinin-1CG3.